Consider the following 133-residue polypeptide: ATP synthase epsilon chain (133 aa).

Belongs to the ATPase epsilon chain family. In terms of assembly, F-type ATPases have 2 components, CF(1) - the catalytic core - and CF(0) - the membrane proton channel. CF(1) has five subunits: alpha(3), beta(3), gamma(1), delta(1), epsilon(1). CF(0) has three main subunits: a, b and c.

It is found in the cell membrane. Its function is as follows. Produces ATP from ADP in the presence of a proton gradient across the membrane. The chain is ATP synthase epsilon chain from Clostridium botulinum (strain Langeland / NCTC 10281 / Type F).